A 200-amino-acid polypeptide reads, in one-letter code: HTH-type transcriptional regulator BetI (200 aa).

The 61-residue stretch at 8 to 68 folds into the HTH tetR-type domain; that stretch reads DIRKPQLVQA…ETMREILRQL (61 aa). Positions 31–50 form a DNA-binding region, H-T-H motif; sequence SIALISKEAGVSTGIINHYF.

The protein operates within amine and polyamine biosynthesis; betaine biosynthesis via choline pathway [regulation]. Its function is as follows. Repressor involved in the biosynthesis of the osmoprotectant glycine betaine. It represses transcription of the choline transporter BetT and the genes of BetAB involved in the synthesis of glycine betaine. The polypeptide is HTH-type transcriptional regulator BetI (Vibrio atlanticus (strain LGP32) (Vibrio splendidus (strain Mel32))).